Here is a 107-residue protein sequence, read N- to C-terminus: Thioredoxin (107 aa).

The 106-residue stretch at 2–107 (SATPQVSDAS…TLASTLEKYL (106 aa)) folds into the Thioredoxin domain. Cysteine 32 and cysteine 35 are disulfide-bonded.

It belongs to the thioredoxin family.

In terms of biological role, component of the thioredoxin-thioredoxin reductase system. Participates in various redox reactions through the reversible oxidation of its active center dithiol to a disulfide and catalyzes dithiol-disulfide exchange reactions. The protein is Thioredoxin (trxA) of Synechocystis sp. (strain ATCC 27184 / PCC 6803 / Kazusa).